A 999-amino-acid chain; its full sequence is Sarcoplasmic/endoplasmic reticulum calcium ATPase 3 (999 aa).

Residue methionine 1 is modified to N-acetylmethionine. Residues 1 to 48 (MEEAHLLSAADVLRRFSVTAEGGLSLEQVTDARERYGPNELPTEEGKS) are Cytoplasmic-facing. Serine 17 is subject to Phosphoserine. The residue at position 19 (threonine 19) is a Phosphothreonine. At serine 25 the chain carries Phosphoserine. Residues 49-69 (LWELVVEQFEDLLVRILLLAA) traverse the membrane as a helical segment. Topologically, residues 70 to 89 (LVSFVLAWFEEGEETTTAFV) are lumenal. Residues 90 to 110 (EPLVIMLILVANAIVGVWQER) traverse the membrane as a helical segment. Residues 111 to 253 (NAESAIEALK…PERTPLQRKL (143 aa)) are Cytoplasmic-facing. The chain crosses the membrane as a helical span at residues 254 to 273 (DEFGRQLSHAISVICVAVWV). The Lumenal portion of the chain corresponds to 274–295 (INIGHFADPAHGGSWLRGAVYY). The chain crosses the membrane as a helical span at residues 296–313 (FKIAVALAVAAIPEGLPA). Ca(2+) is bound by residues valine 304, alanine 305, isoleucine 307, and glutamate 309. The Cytoplasmic portion of the chain corresponds to 314–757 (VITTCLALGT…EEGRAIYNNM (444 aa)). The active-site 4-aspartylphosphate intermediate is the aspartate 351. The Mg(2+) site is built by aspartate 351 and threonine 353. Threonine 353 serves as a coordination point for ATP. An interaction with phospholamban 1 region spans residues 370 to 400 (AEAEAGTCRLHEFTISGTTYTPEGEVRQGEQ). The residue at position 415 (threonine 415) is a Phosphothreonine. Glutamate 442, arginine 489, lysine 515, arginine 560, threonine 625, glycine 626, and aspartate 627 together coordinate ATP. Residue serine 662 is modified to Phosphoserine. The ATP site is built by arginine 678 and lysine 684. Aspartate 703 lines the Mg(2+) pocket. Asparagine 706 lines the ATP pocket. A helical transmembrane segment spans residues 758 to 777 (KQFIRYLISSNVGEVVCIFL). Ca(2+) contacts are provided by asparagine 768 and glutamate 771. Topologically, residues 778-787 (TAILGLPEAL) are lumenal. The chain crosses the membrane as a helical span at residues 788 to 808 (IPVQLLWVNLVTDGLPATALG). The interval 788 to 808 (IPVQLLWVNLVTDGLPATALG) is interaction with phospholamban 2. 3 residues coordinate Ca(2+): asparagine 796, threonine 799, and aspartate 800. The Cytoplasmic segment spans residues 809-828 (FNPPDLDIMEKPPRNPREAL). The helical transmembrane segment at 829-851 (ISGWLFFRYLAIGVYVGLATVAA) threads the bilayer. Topologically, residues 852 to 897 (ATWWFLYDTEGPQVTFYQLRNFLKCSEDNPLFAGIDCKVFESRFPT) are lumenal. The chain crosses the membrane as a helical span at residues 898–917 (TMALSVLVTIEMCNALNSVS). Glutamate 908 serves as a coordination point for Ca(2+). At 918-930 (ENQSLLRMPPWLN) the chain is on the cytoplasmic side. A helical transmembrane segment spans residues 931-949 (PWLLGAVVMSMALHFLILL). Residues 950-964 (VPPLPLIFQVTPLSG) are Lumenal-facing. The helical transmembrane segment at 965–985 (RQWGVVLQMSLPVILLDEALK) threads the bilayer. The Cytoplasmic segment spans residues 986–999 (YLSRNHMDEKKDLK).

The protein belongs to the cation transport ATPase (P-type) (TC 3.A.3) family. Type IIA subfamily. Interacts with sarcolipin (SLN). Interacts with phospholamban (PLN). Interacts with myoregulin (MRLN). Interacts with DWORF. Interacts with VMP1. Interacts with TUNAR; the interaction occurs at low levels in low glucose conditions and is increased by high glucose levels. It depends on Mg(2+) as a cofactor.

The protein localises to the endoplasmic reticulum membrane. Its subcellular location is the sarcoplasmic reticulum membrane. The catalysed reaction is Ca(2+)(in) + ATP + H2O = Ca(2+)(out) + ADP + phosphate + H(+). Its activity is regulated as follows. Inhibited by sarcolipin (SLN), phospholamban (PLN) and myoregulin (MRLN). Enhanced by DWORF; DWORF increases activity by displacing sarcolipin (SLN), phospholamban (PLN) and myoregulin (MRLN). Functionally, this magnesium-dependent enzyme catalyzes the hydrolysis of ATP coupled with the transport of calcium. Transports calcium ions from the cytosol into the sarcoplasmic/endoplasmic reticulum lumen. Contributes to calcium sequestration involved in muscular excitation/contraction. In Mus musculus (Mouse), this protein is Sarcoplasmic/endoplasmic reticulum calcium ATPase 3 (Atp2a3).